We begin with the raw amino-acid sequence, 628 residues long: Exonuclease V, mitochondrial (628 aa).

The transit peptide at 1–21 (MSRFWHFKKFYFTSCYSMQRM) directs the protein to the mitochondrion. Positions 37–58 (TSEHEQVQSISKEESRSLSSND) are disordered. The segment covering 38–52 (SEHEQVQSISKEESR) has biased composition (basic and acidic residues). Residues Cys-164, Cys-586, Cys-589, and Cys-595 each contribute to the [4Fe-4S] cluster site.

The protein belongs to the EXO5 family. Monomer. Mg(2+) is required as a cofactor. It depends on [4Fe-4S] cluster as a cofactor.

Its subcellular location is the mitochondrion. Its function is as follows. Single strand DNA specific 5' exonuclease involved in mitochondrial DNA replication and recombination. Releases dinucleotides as main products of catalysis. Has the capacity to slide across 5'double-stranded DNA or 5'RNA sequences and resumes cutting two nucleotides downstream of the double-stranded-to-single-stranded junction or RNA-to-DNA junction, respectively. This Candida albicans (strain SC5314 / ATCC MYA-2876) (Yeast) protein is Exonuclease V, mitochondrial (DEM1).